A 376-amino-acid polypeptide reads, in one-letter code: uncharacterized protein (376 aa).

This sequence belongs to the glycosyltransferase 28 family.

This is an uncharacterized protein from Methanosarcina mazei (strain ATCC BAA-159 / DSM 3647 / Goe1 / Go1 / JCM 11833 / OCM 88) (Methanosarcina frisia).